The chain runs to 229 residues: Small ribosomal subunit protein uS2c (229 aa).

This sequence belongs to the universal ribosomal protein uS2 family.

The protein resides in the plastid. It is found in the chloroplast. The polypeptide is Small ribosomal subunit protein uS2c (rps2) (Emiliania huxleyi (Coccolithophore)).